The following is a 156-amino-acid chain: Small ribosomal subunit protein uS7 (156 aa).

It belongs to the universal ribosomal protein uS7 family. In terms of assembly, part of the 30S ribosomal subunit. Contacts proteins S9 and S11.

Functionally, one of the primary rRNA binding proteins, it binds directly to 16S rRNA where it nucleates assembly of the head domain of the 30S subunit. Is located at the subunit interface close to the decoding center, probably blocks exit of the E-site tRNA. The chain is Small ribosomal subunit protein uS7 from Deinococcus geothermalis (strain DSM 11300 / CIP 105573 / AG-3a).